The sequence spans 394 residues: Exodeoxyribonuclease 7 large subunit (394 aa).

Belongs to the XseA family. As to quaternary structure, heterooligomer composed of large and small subunits.

It is found in the cytoplasm. It carries out the reaction Exonucleolytic cleavage in either 5'- to 3'- or 3'- to 5'-direction to yield nucleoside 5'-phosphates.. Bidirectionally degrades single-stranded DNA into large acid-insoluble oligonucleotides, which are then degraded further into small acid-soluble oligonucleotides. The sequence is that of Exodeoxyribonuclease 7 large subunit from Thermotoga maritima (strain ATCC 43589 / DSM 3109 / JCM 10099 / NBRC 100826 / MSB8).